Here is a 177-residue protein sequence, read N- to C-terminus: uncharacterized protein (177 aa).

An N-terminal signal peptide occupies residues 1–22 (MCGVVVVIVALVPADPLLPAFA). Transmembrane regions (helical) follow at residues 31–51 (VFIP…TCVF), 94–114 (ISLM…LKFV), and 136–156 (LFPI…LLEI).

It is found in the membrane. This is an uncharacterized protein from Saccharomyces cerevisiae (strain ATCC 204508 / S288c) (Baker's yeast).